The sequence spans 134 residues: Small ribosomal subunit protein uS8 (134 aa).

Belongs to the universal ribosomal protein uS8 family. As to quaternary structure, part of the 30S ribosomal subunit. Contacts proteins S5 and S12.

In terms of biological role, one of the primary rRNA binding proteins, it binds directly to 16S rRNA central domain where it helps coordinate assembly of the platform of the 30S subunit. The polypeptide is Small ribosomal subunit protein uS8 (Thermotoga neapolitana (strain ATCC 49049 / DSM 4359 / NBRC 107923 / NS-E)).